A 299-amino-acid chain; its full sequence is Phosphoribosylaminoimidazole-succinocarboxamide synthase (299 aa).

Residues P259–V279 are disordered.

Belongs to the SAICAR synthetase family.

The enzyme catalyses 5-amino-1-(5-phospho-D-ribosyl)imidazole-4-carboxylate + L-aspartate + ATP = (2S)-2-[5-amino-1-(5-phospho-beta-D-ribosyl)imidazole-4-carboxamido]succinate + ADP + phosphate + 2 H(+). Its pathway is purine metabolism; IMP biosynthesis via de novo pathway; 5-amino-1-(5-phospho-D-ribosyl)imidazole-4-carboxamide from 5-amino-1-(5-phospho-D-ribosyl)imidazole-4-carboxylate: step 1/2. In Streptomyces avermitilis (strain ATCC 31267 / DSM 46492 / JCM 5070 / NBRC 14893 / NCIMB 12804 / NRRL 8165 / MA-4680), this protein is Phosphoribosylaminoimidazole-succinocarboxamide synthase.